The following is a 446-amino-acid chain: Glucarate dehydratase-related protein (446 aa).

4 residues coordinate substrate: His-31, Thr-104, Tyr-149, and Lys-204. The Proton acceptor role is filled by Lys-206. Asp-234, Glu-265, and Asn-288 together coordinate Mg(2+). Asp-234–Asn-236 is a substrate binding site. Substrate-binding positions include Asn-288, His-338–Asn-340, His-367, and Arg-421. His-338 acts as the Proton acceptor in catalysis.

Belongs to the mandelate racemase/muconate lactonizing enzyme family. GlucD subfamily. It depends on a divalent metal cation as a cofactor.

Functionally, does not seem to have an in-vivo activity on glucarate or idarate. Its real substrate is unknown. The protein is Glucarate dehydratase-related protein (gudX) of Escherichia coli (strain K12).